Here is a 335-residue protein sequence, read N- to C-terminus: Nucleoid-associated protein YejK (335 aa).

This sequence belongs to the YejK family.

It is found in the cytoplasm. The protein localises to the nucleoid. This chain is Nucleoid-associated protein YejK, found in Escherichia coli (strain K12 / MC4100 / BW2952).